Here is a 346-residue protein sequence, read N- to C-terminus: MMVHSPLATGPHPTTHLEPTMHQPHRSLLRKAFQMIPPLDGSLHKGQAGRIGIVGGSKDYTGAPFYSGYASLRLGSDLSHVICEPSASTVIKTYSPDLMVHSYLSSPKEPEAYASHQNQFEQLLDRLHVLVVGPGLGRDTEMQDWAEWTLKTAIQKKLHLVLDADALWLLVKKPDLLRGYPNAILTPNHVEFQRLLKACSIEPREHDDDGLLAMELSKALGGCSILQKGSIDLVAREGSEVAKVSCEGSPKRCGGQGDILSGLVGTWCAWTKLYFERQSQDEKPKSHELPISPEEAWIIAAVLGSEITRTCSRLAYHKFGRSMQSSDMLGYIGEAFEQVMHGHTKD.

Positions 1 to 20 (MMVHSPLATGPHPTTHLEPT) are disordered. Residues 28 to 339 (LLRKAFQMIP…GYIGEAFEQV (312 aa)) enclose the YjeF C-terminal domain. (6S)-NADPHX is bound by residues Gly135 and 188–194 (NHVEFQR). Residues 228–232 (KGSID) and 248–257 (GSPKRCGGQG) each bind ATP. Asp258 lines the (6S)-NADPHX pocket.

It belongs to the NnrD/CARKD family. The cofactor is Mg(2+).

It is found in the cytoplasm. It catalyses the reaction (6S)-NADHX + ATP = ADP + phosphate + NADH + H(+). The enzyme catalyses (6S)-NADPHX + ATP = ADP + phosphate + NADPH + H(+). In terms of biological role, catalyzes the dehydration of the S-form of NAD(P)HX at the expense of ATP, which is converted to ADP. Together with NAD(P)HX epimerase, which catalyzes the epimerization of the S- and R-forms, the enzyme allows the repair of both epimers of NAD(P)HX, a damaged form of NAD(P)H that is a result of enzymatic or heat-dependent hydration. The sequence is that of ATP-dependent (S)-NAD(P)H-hydrate dehydratase 2 from Puccinia graminis f. sp. tritici (strain CRL 75-36-700-3 / race SCCL) (Black stem rust fungus).